A 284-amino-acid polypeptide reads, in one-letter code: Phosphatidylglycerol--prolipoprotein diacylglyceryl transferase (284 aa).

7 helical membrane passes run 19-39 (ISFYWYGMMYVLSFIFAMWFL), 60-80 (LLYLNFLGVVIGGRIGYVLFY), 98-118 (GGMSFHGGLIGVIISIMWFSY), 130-150 (FIVPAVPVGLGLGRLGNFING), 199-219 (QLYEMILEGIVLFVVIYIFSC), 225-245 (GSISGLFLLLYGLFRIIIEFF), and 258-278 (FITLGQVLSFPMVIFGFIIMY). R143 lines the a 1,2-diacyl-sn-glycero-3-phospho-(1'-sn-glycerol) pocket.

Belongs to the Lgt family.

Its subcellular location is the cell inner membrane. It catalyses the reaction L-cysteinyl-[prolipoprotein] + a 1,2-diacyl-sn-glycero-3-phospho-(1'-sn-glycerol) = an S-1,2-diacyl-sn-glyceryl-L-cysteinyl-[prolipoprotein] + sn-glycerol 1-phosphate + H(+). Its pathway is protein modification; lipoprotein biosynthesis (diacylglyceryl transfer). Functionally, catalyzes the transfer of the diacylglyceryl group from phosphatidylglycerol to the sulfhydryl group of the N-terminal cysteine of a prolipoprotein, the first step in the formation of mature lipoproteins. This Blochmanniella floridana protein is Phosphatidylglycerol--prolipoprotein diacylglyceryl transferase.